We begin with the raw amino-acid sequence, 91 residues long: Signal recognition particle 19 kDa protein (91 aa).

The protein belongs to the SRP19 family. Part of the signal recognition particle protein translocation system, which is composed of SRP and FtsY. Archaeal SRP consists of a 7S RNA molecule of 300 nucleotides and two protein subunits: SRP54 and SRP19.

The protein localises to the cytoplasm. Its function is as follows. Involved in targeting and insertion of nascent membrane proteins into the cytoplasmic membrane. Binds directly to 7S RNA and mediates binding of the 54 kDa subunit of the SRP. This Methanoregula boonei (strain DSM 21154 / JCM 14090 / 6A8) protein is Signal recognition particle 19 kDa protein.